A 228-amino-acid polypeptide reads, in one-letter code: Glucose-induced degradation protein 8-A homolog (228 aa).

Residues 25-57 (QRADMNRLIMNYLVTEGFKEAAEKFRMESGIEP) enclose the LisH domain. The CTLH domain maps to 63–120 (SLDERIKIREMVLKGQIQEAIALINSLHPELLDTNRYLYFHLQQQHLIELIRLRETEA).

This sequence belongs to the GID8 family. In terms of assembly, identified in the CTLH complex that contains at least MAEA, RMND5A (or alternatively its paralog RMND5B), GID8, WDR26, and RANBP9 and/or RANBP10. Interacts with CTNNB1.

Functionally, core component of the CTLH E3 ubiquitin-protein ligase complex that selectively accepts ubiquitin from UBE2H and mediates ubiquitination and subsequent proteasomal degradation of target proteins. Acts as a positive regulator of Wnt signaling pathway by promoting beta-catenin (CTNNB1) nuclear accumulation. Required for normal Wnt signaling and normal dorsoventral patterning during embryogenesis. In Danio rerio (Zebrafish), this protein is Glucose-induced degradation protein 8-A homolog (gid8a).